The sequence spans 217 residues: Guanylate kinase (217 aa).

The Guanylate kinase-like domain occupies 10–190 (GLLIILSSPS…TEEALKTIIT (181 aa)). 17–24 (SPSGAGKS) contacts ATP.

Belongs to the guanylate kinase family.

Its subcellular location is the cytoplasm. It carries out the reaction GMP + ATP = GDP + ADP. Essential for recycling GMP and indirectly, cGMP. The protein is Guanylate kinase of Ruegeria sp. (strain TM1040) (Silicibacter sp.).